Consider the following 420-residue polypeptide: Serine palmitoyltransferase (420 aa).

Over residues 1-21 the composition is skewed to polar residues; that stretch reads MKHNLQDNLQGEQMANTNSNG. Positions 1–25 are disordered; the sequence is MKHNLQDNLQGEQMANTNSNGGKKP. Pyridoxal 5'-phosphate-binding positions include 132 to 133, histidine 233, threonine 261, and serine 263; that span reads GM. Lysine 264 is subject to N6-(pyridoxal phosphate)lysine.

This sequence belongs to the class-II pyridoxal-phosphate-dependent aminotransferase family. In terms of assembly, homodimer. Requires pyridoxal 5'-phosphate as cofactor.

It is found in the cytoplasm. Its subcellular location is the cell inner membrane. The catalysed reaction is L-serine + hexadecanoyl-CoA + H(+) = 3-oxosphinganine + CO2 + CoA. It participates in lipid metabolism; sphingolipid metabolism. Its activity is regulated as follows. Significantly inhibited by palmitoyl-CoA concentrations greater than 100 uM. Functionally, catalyzes the condensation of L-serine with palmitoyl-CoA (hexadecanoyl-CoA) to produce 3-oxosphinganine. In Bacteriovorax stolpii (Bdellovibrio stolpii), this protein is Serine palmitoyltransferase.